Here is a 257-residue protein sequence, read N- to C-terminus: PHD finger protein Alfin1 (257 aa).

The disordered stretch occupies residues 145-200 (SKDQLTAHNNGSNSKYKSSGKSRQSESQTKGVKMSAPVKEEVDSGEEEEEDDDEQG). Over residues 153–166 (NNGSNSKYKSSGKS) the composition is skewed to low complexity. The segment covering 187–199 (DSGEEEEEDDDEQ) has biased composition (acidic residues). The segment at 200 to 252 (GATCGACGDNYGTDEFWICCDMCEKWFHGKCVKITPAKAEHIKQYKCPGCSIK) adopts a PHD-type zinc-finger fold.

This sequence belongs to the Alfin family. In terms of assembly, interacts with H3K4me3 and to a lesser extent with H3K4me2. In terms of tissue distribution, predominantly expressed in the roots.

It localises to the nucleus. Histone-binding component that specifically recognizes H3 tails trimethylated on 'Lys-4' (H3K4me3), which mark transcription start sites of virtually all active genes. Transcriptional regulator that binds specifically to DNA sequences 5'-GNGGTG-3' or 5'-GTGGNG-3', including promoter elements of the salt-inducible PRP2 gene. Plays a role in salinity tolerance. The sequence is that of PHD finger protein Alfin1 (ALFIN-1) from Medicago sativa (Alfalfa).